The chain runs to 453 residues: Homogentisate 1,2-dioxygenase (453 aa).

His306 acts as the Proton acceptor in catalysis. Residues His349 and Glu355 each coordinate Fe cation. 2 residues coordinate homogentisate: Tyr364 and His385. Position 385 (His385) interacts with Fe cation.

This sequence belongs to the homogentisate dioxygenase family. Hexamer; dimer of trimers. The cofactor is Fe cation.

The enzyme catalyses homogentisate + O2 = 4-maleylacetoacetate + H(+). It functions in the pathway amino-acid degradation; L-phenylalanine degradation; acetoacetate and fumarate from L-phenylalanine: step 4/6. Functionally, involved in the catabolism of homogentisate (2,5-dihydroxyphenylacetate or 2,5-OH-PhAc), a central intermediate in the degradation of phenylalanine and tyrosine. Catalyzes the oxidative ring cleavage of the aromatic ring of homogentisate to yield maleylacetoacetate. The chain is Homogentisate 1,2-dioxygenase from Rhizobium etli (strain CIAT 652).